The following is a 159-amino-acid chain: MQIWHMEPFPCGDRRLPHHVFPPKKITTTQLGQLAGVQYYKVDLDDTASMKKRLSAVKTEKNVTFTDMFTVSETMLEFDDKMEQFYEPQVQKEDVISLVVEGTCYYDVEPEDDSWIRVQVEKGDLIVIPKGLSHRFTTTPQNFVKIQRFFSRKVEGNQG.

It belongs to the acireductone dioxygenase (ARD) family.

It is found in the cytoplasm. Its subcellular location is the nucleus. In terms of biological role, probable inactive acireductone dioxygenase. This chain is Probable inactive acireductone dioxygenase 1, found in Caenorhabditis elegans.